The primary structure comprises 430 residues: Histidine--tRNA ligase (430 aa).

Belongs to the class-II aminoacyl-tRNA synthetase family. Homodimer.

The protein localises to the cytoplasm. The catalysed reaction is tRNA(His) + L-histidine + ATP = L-histidyl-tRNA(His) + AMP + diphosphate + H(+). This is Histidine--tRNA ligase from Acinetobacter baumannii (strain SDF).